A 368-amino-acid chain; its full sequence is Quinolinate synthase (368 aa).

Iminosuccinate is bound by residues His-46 and Ser-63. Position 110 (Cys-110) interacts with [4Fe-4S] cluster. Iminosuccinate-binding positions include 141 to 143 and Ser-162; that span reads YVN. Position 230 (Cys-230) interacts with [4Fe-4S] cluster. Iminosuccinate contacts are provided by residues 256–258 and Thr-273; that span reads HPE. Cys-320 serves as a coordination point for [4Fe-4S] cluster.

The protein belongs to the quinolinate synthase family. Type 3 subfamily. The cofactor is [4Fe-4S] cluster.

It is found in the cytoplasm. It carries out the reaction iminosuccinate + dihydroxyacetone phosphate = quinolinate + phosphate + 2 H2O + H(+). The protein operates within cofactor biosynthesis; NAD(+) biosynthesis; quinolinate from iminoaspartate: step 1/1. Its function is as follows. Catalyzes the condensation of iminoaspartate with dihydroxyacetone phosphate to form quinolinate. This chain is Quinolinate synthase, found in Bacillus thuringiensis subsp. konkukian (strain 97-27).